We begin with the raw amino-acid sequence, 293 residues long: Phosphatidylglycerol--prolipoprotein diacylglyceryl transferase (293 aa).

4 consecutive transmembrane segments (helical) span residues I4 to F24, F45 to A65, E81 to F101, and I115 to L135. R165 contributes to the a 1,2-diacyl-sn-glycero-3-phospho-(1'-sn-glycerol) binding site. A run of 3 helical transmembrane segments spans residues P204–F224, H231–I249, and I262–I282.

It belongs to the Lgt family.

Its subcellular location is the cell inner membrane. The enzyme catalyses L-cysteinyl-[prolipoprotein] + a 1,2-diacyl-sn-glycero-3-phospho-(1'-sn-glycerol) = an S-1,2-diacyl-sn-glyceryl-L-cysteinyl-[prolipoprotein] + sn-glycerol 1-phosphate + H(+). It functions in the pathway protein modification; lipoprotein biosynthesis (diacylglyceryl transfer). Functionally, catalyzes the transfer of the diacylglyceryl group from phosphatidylglycerol to the sulfhydryl group of the N-terminal cysteine of a prolipoprotein, the first step in the formation of mature lipoproteins. The sequence is that of Phosphatidylglycerol--prolipoprotein diacylglyceryl transferase from Thermotoga petrophila (strain ATCC BAA-488 / DSM 13995 / JCM 10881 / RKU-1).